Reading from the N-terminus, the 713-residue chain is Constitutive lysine decarboxylase (713 aa).

Lys367 bears the N6-(pyridoxal phosphate)lysine mark.

The protein belongs to the Orn/Lys/Arg decarboxylase class-I family. Homodecamer; built of five dimers associated in a 5-fold symmetrical double-ring. Pyridoxal 5'-phosphate is required as a cofactor.

It carries out the reaction L-lysine + H(+) = cadaverine + CO2. Its function is as follows. Plays a role in lysine utilization by acting as a lysine decarboxylase. The chain is Constitutive lysine decarboxylase (ldcC) from Escherichia coli (strain K12).